We begin with the raw amino-acid sequence, 321 residues long: GDP-L-fucose synthase (321 aa).

Residue 14–20 participates in NADP(+) binding; the sequence is GGSGLVG. Tyr143 acts as the Proton donor/acceptor in catalysis. NADP(+) contacts are provided by residues Lys147, 170–173, and His186; that span reads PTNV. Residues Lys194, Trp208, Arg215, and Asp277 each contribute to the substrate site.

The protein belongs to the NAD(P)-dependent epimerase/dehydratase family. Fucose synthase subfamily. In terms of assembly, homodimer.

It carries out the reaction GDP-beta-L-fucose + NADP(+) = GDP-4-dehydro-alpha-D-rhamnose + NADPH + H(+). It participates in nucleotide-sugar biosynthesis; GDP-L-fucose biosynthesis via de novo pathway; GDP-L-fucose from GDP-alpha-D-mannose: step 2/2. Catalyzes the two-step NADP-dependent conversion of GDP-4-dehydro-6-deoxy-D-mannose to GDP-fucose, involving an epimerase and a reductase reaction. This chain is GDP-L-fucose synthase, found in Mus musculus (Mouse).